The chain runs to 308 residues: Glutaminase (308 aa).

7 residues coordinate substrate: serine 65, asparagine 116, glutamate 161, asparagine 168, tyrosine 192, tyrosine 244, and valine 262.

Belongs to the glutaminase family. As to quaternary structure, homotetramer.

The enzyme catalyses L-glutamine + H2O = L-glutamate + NH4(+). This Geobacillus kaustophilus (strain HTA426) protein is Glutaminase.